The following is a 1214-amino-acid chain: Zinc finger E-box-binding homeobox 2 (1214 aa).

The tract at residues 1 to 101 (MKQPIMADGP…GVEHPWHNNE (101 aa)) is disordered. A compositionally biased stretch (basic residues) spans 12-24 (CKRRKQANPRRKN). Polar residues predominate over residues 57-74 (DQETSPASVPNHESSPHV). Over residues 89–98 (REGGVEHPWH) the composition is skewed to basic and acidic residues. At serine 142 the chain carries Phosphoserine. 3 C2H2-type zinc fingers span residues 211-234 (LTCP…KYRH), 241-263 (FSCP…MVTH), and 282-304 (FKCT…LRIH). The C2H2-type 4; atypical zinc-finger motif lies at 310–334 (YECPNCKKRFSHSGSYSSHISSKKC). Serine 356, serine 360, and serine 364 each carry phosphoserine. Lysine 377 is modified (N6-acetyllysine). Lysine 391 participates in a covalent cross-link: Glycyl lysine isopeptide (Lys-Gly) (interchain with G-Cter in SUMO); alternate. Lysine 391 is covalently cross-linked (Glycyl lysine isopeptide (Lys-Gly) (interchain with G-Cter in SUMO2); alternate). The segment at 437–487 (QHLGVGMEAPLLGFPTMNSNLSEVQKVLQIVDNTVSRQKMDCKAEEISKLK) is SMAD-MH2 binding domain. Glycyl lysine isopeptide (Lys-Gly) (interchain with G-Cter in SUMO2) cross-links involve residues lysine 479 and lysine 555. The C2H2-type 5; atypical zinc-finger motif lies at 581 to 605 (FSCQFCKESFPGPIPLHQHERYLCK). Glycyl lysine isopeptide (Lys-Gly) (interchain with G-Cter in SUMO2) cross-links involve residues lysine 611 and lysine 632. Positions 644-703 (GMTSPINPYKDHMSVLKAYYAMNMEPNSDELLKISIAVGLPQEFVKEWFEQRKVYQYSNS) form a DNA-binding region, homeobox; atypical. Serine 647 is subject to Phosphoserine. Residues 702 to 715 (NSRSPSLERSSKPL) are compositionally biased toward low complexity. Disordered stretches follow at residues 702–740 (NSRS…DSIT), 771–810 (PVEK…SSEE), and 832–857 (ATKN…ENSD). Residue lysine 713 forms a Glycyl lysine isopeptide (Lys-Gly) (interchain with G-Cter in SUMO2) linkage. A phosphoserine mark is found at serine 731 and serine 780. Low complexity-rich tracts occupy residues 780 to 808 (SNTP…SFSS) and 840 to 854 (SSIS…SSSE). Threonine 782 bears the Phosphothreonine mark. Serine 784 carries the phosphoserine modification. Residue lysine 866 forms a Glycyl lysine isopeptide (Lys-Gly) (interchain with G-Cter in SUMO); alternate linkage. Lysine 866 is covalently cross-linked (Glycyl lysine isopeptide (Lys-Gly) (interchain with G-Cter in SUMO2); alternate). 2 consecutive C2H2-type zinc fingers follow at residues 999-1021 (YACD…KYEH) and 1027-1049 (HQCQ…SRLH). The C2H2-type 8; atypical zinc-finger motif lies at 1055-1076 (YQCDKCGKRFSHSGSYSQHMNH). The segment at 1117–1214 (TPQGYSDSEE…HEEDNMEDGM (98 aa)) is disordered. Residues serine 1122 and serine 1124 each carry the phosphoserine modification. Positions 1127–1155 (RESMPRDGESEKEHEKEGEDGYGKLGRQD) are enriched in basic and acidic residues. A compositionally biased stretch (acidic residues) spans 1156 to 1167 (GDEEFEEEEEES). Basic and acidic residues-rich tracts occupy residues 1168-1179 (ENKSMDTDPETI) and 1186-1205 (GDHS…KSDH). Serine 1203 carries the post-translational modification Phosphoserine.

This sequence belongs to the delta-EF1/ZFH-1 C2H2-type zinc-finger family. In terms of assembly, binds activated SMAD1, activated SMAD2 and activated SMAD3; binding with SMAD4 is not detected. Interacts with CBX4 and CTBP1. Sumoylation on Lys-391 and Lys-866 is promoted by the E3 SUMO-protein ligase CBX4, and impairs interaction with CTBP1 and transcription repression activity.

Its subcellular location is the nucleus. The protein resides in the chromosome. In terms of biological role, transcriptional inhibitor that binds to DNA sequence 5'-CACCT-3' in different promoters. Represses transcription of E-cadherin. Represses expression of MEOX2. The sequence is that of Zinc finger E-box-binding homeobox 2 from Homo sapiens (Human).